Consider the following 109-residue polypeptide: Thiosulfate sulfurtransferase GlpE (109 aa).

In terms of domain architecture, Rhodanese spans 17 to 105 (HQQTAVLVDI…WHRHFPAEVA (89 aa)). Cys-65 (cysteine persulfide intermediate) is an active-site residue.

This sequence belongs to the GlpE family.

The protein localises to the cytoplasm. The catalysed reaction is thiosulfate + hydrogen cyanide = thiocyanate + sulfite + 2 H(+). The enzyme catalyses thiosulfate + [thioredoxin]-dithiol = [thioredoxin]-disulfide + hydrogen sulfide + sulfite + 2 H(+). Transferase that catalyzes the transfer of sulfur from thiosulfate to thiophilic acceptors such as cyanide or dithiols. May function in a CysM-independent thiosulfate assimilation pathway by catalyzing the conversion of thiosulfate to sulfite, which can then be used for L-cysteine biosynthesis. This is Thiosulfate sulfurtransferase GlpE from Klebsiella pneumoniae (strain 342).